The primary structure comprises 396 residues: Tyrosine--tRNA ligase (396 aa).

The 'HIGH' region motif lies at 39–48 (PTAPDLHLGH). The 'KMSKS' region motif lies at 223-227 (KMSKS). Residue lysine 226 coordinates ATP. The S4 RNA-binding domain maps to 334–395 (LPVPQLLKQA…GKRKFARVTV (62 aa)).

This sequence belongs to the class-I aminoacyl-tRNA synthetase family. TyrS type 2 subfamily. Homodimer.

It is found in the cytoplasm. It carries out the reaction tRNA(Tyr) + L-tyrosine + ATP = L-tyrosyl-tRNA(Tyr) + AMP + diphosphate + H(+). Its function is as follows. Catalyzes the attachment of tyrosine to tRNA(Tyr) in a two-step reaction: tyrosine is first activated by ATP to form Tyr-AMP and then transferred to the acceptor end of tRNA(Tyr). The polypeptide is Tyrosine--tRNA ligase (Thiobacillus denitrificans (strain ATCC 25259 / T1)).